Reading from the N-terminus, the 800-residue chain is DNA topoisomerase 1 (800 aa).

In terms of domain architecture, Toprim spans 1-111 (MKLVIVESPA…VKSDDFFKRV (111 aa)). Residues glutamate 7 and aspartate 80 each coordinate Mg(2+). Residues 132–568 (DNNLVNAQQA…FWNGFNHNIE (437 aa)) enclose the Topo IA-type catalytic domain. Residues 166-171 (SAGRVQ) form an interaction with DNA region. Tyrosine 304 acts as the O-(5'-phospho-DNA)-tyrosine intermediate in catalysis. The C4-type zinc-finger motif lies at 600 to 627 (CPSCKTGELSLKLGKFGAFLACSNYPEC).

Belongs to the type IA topoisomerase family. As to quaternary structure, monomer. Requires Mg(2+) as cofactor.

It carries out the reaction ATP-independent breakage of single-stranded DNA, followed by passage and rejoining.. Releases the supercoiling and torsional tension of DNA, which is introduced during the DNA replication and transcription, by transiently cleaving and rejoining one strand of the DNA duplex. Introduces a single-strand break via transesterification at a target site in duplex DNA. The scissile phosphodiester is attacked by the catalytic tyrosine of the enzyme, resulting in the formation of a DNA-(5'-phosphotyrosyl)-enzyme intermediate and the expulsion of a 3'-OH DNA strand. The free DNA strand then undergoes passage around the unbroken strand, thus removing DNA supercoils. Finally, in the religation step, the DNA 3'-OH attacks the covalent intermediate to expel the active-site tyrosine and restore the DNA phosphodiester backbone. This chain is DNA topoisomerase 1, found in Rickettsia bellii (strain RML369-C).